Consider the following 276-residue polypeptide: Ribonuclease 3 (276 aa).

An RNase III domain is found at 30 to 161; it reads LTAFIRSLFK…LTGAIYLDRG (132 aa). A Mg(2+)-binding site is contributed by Glu-74. Asp-78 is an active-site residue. Mg(2+) contacts are provided by Asp-147 and Glu-150. The active site involves Glu-150. Residues 188-257 form the DRBM domain; that stretch reads NHKSRLIEHT…AEEAMGALER (70 aa).

The protein belongs to the ribonuclease III family. As to quaternary structure, homodimer. It depends on Mg(2+) as a cofactor.

The protein resides in the cytoplasm. It carries out the reaction Endonucleolytic cleavage to 5'-phosphomonoester.. Digests double-stranded RNA. Involved in the processing of primary rRNA transcript to yield the immediate precursors to the large and small rRNAs (23S and 16S). Processes some mRNAs, and tRNAs when they are encoded in the rRNA operon. Processes pre-crRNA and tracrRNA of type II CRISPR loci if present in the organism. The sequence is that of Ribonuclease 3 from Chlorobium luteolum (strain DSM 273 / BCRC 81028 / 2530) (Pelodictyon luteolum).